The sequence spans 374 residues: MALSKDLMLKCSEDMMSAYKSACEEHPKLKSFDASLQQRTNKMIDSLTVEDKNGSSSPHDAHMELSKHLVEVTQGVADFITEIEDDVWDNQALKYLVLAYFENTKKTLEIFKTIENCVENAEMGQLLIREALAEFEKESAEKDVGGKKKKYEKTLEDLKSFKEMGDPFDGKVLTTQFERIKKQQESLLEEVSETRKKIQDEISNLEKKTLITNVVFGAAFAIVAVASIALIATGVGAAAGFGALAAPLLAAGWAGVYTTLDKKKDALNKQLEGLKKVEEIEESVEKGIKTNEEATETVSILVDGLEDRIKNMLKLVDNAIDHEDNEAATRIVLTQISKKVEKLTKKITEVGESVEDHSKLIAKARLQVLQKINR.

A coiled-coil region spans residues 171–210 (KVLTTQFERIKKQQESLLEEVSETRKKIQDEISNLEKKTL). A run of 2 helical transmembrane segments spans residues 214–234 (VVFG…IATG) and 235–255 (VGAA…GWAG). A coiled-coil region spans residues 256–321 (VYTTLDKKKD…MLKLVDNAID (66 aa)).

It belongs to the UPF0496 family.

It is found in the membrane. The protein is UPF0496 protein At3g28270 of Arabidopsis thaliana (Mouse-ear cress).